Consider the following 309-residue polypeptide: UDP-N-acetylenolpyruvoylglucosamine reductase (309 aa).

One can recognise an FAD-binding PCMH-type domain in the interval 25–188 (RVGGPADWLF…TSVTLQGNRE (164 aa)). R168 is a catalytic residue. The interval 202-231 (AKRDATQPTKALTAGSTFRNPAGFSSTGQA) is disordered. Residues 207–231 (TQPTKALTAGSTFRNPAGFSSTGQA) show a composition bias toward polar residues. S217 serves as the catalytic Proton donor. The active site involves E299.

It belongs to the MurB family. Requires FAD as cofactor.

It localises to the cytoplasm. It carries out the reaction UDP-N-acetyl-alpha-D-muramate + NADP(+) = UDP-N-acetyl-3-O-(1-carboxyvinyl)-alpha-D-glucosamine + NADPH + H(+). It functions in the pathway cell wall biogenesis; peptidoglycan biosynthesis. Functionally, cell wall formation. In Jannaschia sp. (strain CCS1), this protein is UDP-N-acetylenolpyruvoylglucosamine reductase.